A 2005-amino-acid polypeptide reads, in one-letter code: Structural maintenance of chromosomes flexible hinge domain-containing protein 1 (2005 aa).

The span at 1–13 (MAAADGGGPGGAS) shows a compositional bias: gly residues. The segment at 1–23 (MAAADGGGPGGASVGTEEDGGGV) is disordered. Ala-2 bears the N-acetylalanine mark. Positions 111–702 (TKERIDFLPH…LSVTWPEGDE (592 aa)) are ATPase activity domain. N6-acetyllysine is present on Lys-1349. Glycyl lysine isopeptide (Lys-Gly) (interchain with G-Cter in SUMO2) cross-links involve residues Lys-1374 and Lys-1496. Phosphothreonine is present on Thr-1499. An SMC hinge domain is found at 1720-1847 (GDVLGKIAHL…DNLDAANHYR (128 aa)). At Lys-1802 the chain carries N6-succinyllysine. Ser-1974 is subject to Phosphoserine.

It belongs to the SMC family. Highly divergent. In terms of assembly, homodimer; homodimerizes via its SMC hinge domain. Interacts with LRIF1. Sumoylated with SUMO1.

Its subcellular location is the chromosome. The catalysed reaction is ATP + H2O = ADP + phosphate + H(+). Non-canonical member of the structural maintenance of chromosomes (SMC) protein family that plays a key role in epigenetic silencing by regulating chromatin architecture. Promotes heterochromatin formation in both autosomes and chromosome X, probably by mediating the merge of chromatin compartments. Plays a key role in chromosome X inactivation in females by promoting the spreading of heterochromatin. Recruited to inactivated chromosome X by Xist RNA and acts by mediating the merge of chromatin compartments: promotes random chromatin interactions that span the boundaries of existing structures, leading to create a compartment-less architecture typical of inactivated chromosome X. Required to facilitate Xist RNA spreading. Also required for silencing of a subset of clustered autosomal loci in somatic cells, such as the DUX4 locus. Has ATPase activity; may participate in structural manipulation of chromatin in an ATP-dependent manner as part of its role in gene expression regulation. Also plays a role in DNA repair: localizes to sites of DNA double-strand breaks in response to DNA damage to promote the repair of DNA double-strand breaks. Acts by promoting non-homologous end joining (NHEJ) and inhibiting homologous recombination (HR) repair. This is Structural maintenance of chromosomes flexible hinge domain-containing protein 1 from Homo sapiens (Human).